The following is a 906-amino-acid chain: Translation initiation factor IF-2 (906 aa).

2 disordered regions span residues 134 to 250 (RQRN…GSHV) and 269 to 317 (HLSA…FERP). A compositionally biased stretch (basic and acidic residues) spans 136 to 177 (RNLDEQQRLAESDRVRDEEIQRKRDEEQAAKDRAEAERKAAE). Low complexity-rich tracts occupy residues 178 to 232 (EAAA…STPA) and 287 to 305 (GRPGSSSSRRGNDNGRGSN). A tr-type G domain is found at 405-574 (TRPPVVTIMG…SLQAEVLELK (170 aa)). Residues 414 to 421 (GHVDHGKT) are G1. 414–421 (GHVDHGKT) contributes to the GTP binding site. The G2 stretch occupies residues 439–443 (GITQH). The G3 stretch occupies residues 460-463 (DTPG). GTP-binding positions include 460–464 (DTPGH) and 514–517 (NKID). A G4 region spans residues 514 to 517 (NKID). The segment at 550-552 (SAK) is G5.

This sequence belongs to the TRAFAC class translation factor GTPase superfamily. Classic translation factor GTPase family. IF-2 subfamily.

Its subcellular location is the cytoplasm. One of the essential components for the initiation of protein synthesis. Protects formylmethionyl-tRNA from spontaneous hydrolysis and promotes its binding to the 30S ribosomal subunits. Also involved in the hydrolysis of GTP during the formation of the 70S ribosomal complex. This chain is Translation initiation factor IF-2, found in Xanthomonas oryzae pv. oryzae (strain MAFF 311018).